Reading from the N-terminus, the 409-residue chain is F-box/kelch-repeat protein At2g44130 (409 aa).

Residues 17–63 (HELIPGLPSELALECLVRVPFQFQSAMRSVCRSWRSLLSDSSFIQER) form the F-box domain. Kelch repeat units lie at residues 98-148 (KKSE…VLQD), 151-199 (KILL…SVSP), 201-248 (KVYV…AVGM), and 251-300 (RFCV…RTAG).

The protein is F-box/kelch-repeat protein At2g44130 of Arabidopsis thaliana (Mouse-ear cress).